A 1191-amino-acid chain; its full sequence is Puratrophin-1 (1191 aa).

Disordered stretches follow at residues methionine 1–glycine 152 and alanine 707–arginine 728. Serine 64 carries the phosphoserine modification. The segment covering serine 111 to serine 120 has biased composition (polar residues). Residues arginine 732–leucine 908 enclose the DH domain. Positions asparagine 920–tryptophan 1027 constitute a PH domain. Residues serine 1150–valine 1176 are disordered. The segment covering serine 1159–valine 1176 has biased composition (low complexity).

Expressed in kidney, Leydig cells in the testis, epithelial cells in the prostate gland and Langerhans islet in the pancreas. Isoform 1 and isoform 3 are strongly expressed in Purkinje cells and to a lower extent in other neurons (at protein level). Widely expressed at low levels. More strongly expressed in testis and pancreas.

Functionally, possible role in intracellular signaling and cytoskeleton dynamics at the Golgi. This Homo sapiens (Human) protein is Puratrophin-1 (PLEKHG4).